The following is a 398-amino-acid chain: Phosphoglycerate kinase (398 aa).

Residues 23 to 25, R38, 61 to 64, R122, and R155 contribute to the substrate site; these read DFN and HMGK. ATP-binding positions include K206, G297, E328, and 354-357; that span reads GGDS.

This sequence belongs to the phosphoglycerate kinase family. Monomer.

It localises to the cytoplasm. The catalysed reaction is (2R)-3-phosphoglycerate + ATP = (2R)-3-phospho-glyceroyl phosphate + ADP. Its pathway is carbohydrate degradation; glycolysis; pyruvate from D-glyceraldehyde 3-phosphate: step 2/5. This Clostridium botulinum (strain Langeland / NCTC 10281 / Type F) protein is Phosphoglycerate kinase.